A 623-amino-acid chain; its full sequence is Isocitrate dehydrogenase kinase/phosphatase (623 aa).

Residues 344 to 350 (APGIKGM) and Lys365 contribute to the ATP site. Asp400 is an active-site residue.

It belongs to the AceK family.

The protein resides in the cytoplasm. The enzyme catalyses L-seryl-[isocitrate dehydrogenase] + ATP = O-phospho-L-seryl-[isocitrate dehydrogenase] + ADP + H(+). Its function is as follows. Bifunctional enzyme which can phosphorylate or dephosphorylate isocitrate dehydrogenase (IDH) on a specific serine residue. This is a regulatory mechanism which enables bacteria to bypass the Krebs cycle via the glyoxylate shunt in response to the source of carbon. When bacteria are grown on glucose, IDH is fully active and unphosphorylated, but when grown on acetate or ethanol, the activity of IDH declines drastically concomitant with its phosphorylation. This chain is Isocitrate dehydrogenase kinase/phosphatase, found in Polaromonas naphthalenivorans (strain CJ2).